The following is a 311-amino-acid chain: Mitochondrial arginine transporter BAC1 (311 aa).

3 Solcar repeats span residues Phe12 to Phe101, Pro111 to His203, and Val219 to Met305. A run of 6 helical transmembrane segments spans residues Tyr18–Val38, Gly76–Ser96, Pro113–Pro133, Gly178–Tyr197, Gly222–Phe242, and Ala288–Ile308.

This sequence belongs to the mitochondrial carrier (TC 2.A.29) family. In terms of tissue distribution, high expression in flowers and siliques. Lower expression in leaves and stems.

The protein localises to the mitochondrion inner membrane. With respect to regulation, inhibited by mercuric chloride. Its function is as follows. Mitochondrial arginine transporter that catalyzes the counter-exchange of arginine with lysine, ornithine, arginine and histidine. Substrate preference in reconstituted proteoliposomes is arginine &gt; lysine &gt; ornithine &gt; histidine. May be involved in the delivery of arginine, released from seed reserves, to mitochondrial arginase and the export of ornithine. This chain is Mitochondrial arginine transporter BAC1 (BAC1), found in Arabidopsis thaliana (Mouse-ear cress).